Consider the following 228-residue polypeptide: Cytidylate kinase (228 aa).

12-20 is a binding site for ATP; sequence GPSGAGKGT.

The protein belongs to the cytidylate kinase family. Type 1 subfamily.

Its subcellular location is the cytoplasm. The enzyme catalyses CMP + ATP = CDP + ADP. The catalysed reaction is dCMP + ATP = dCDP + ADP. The sequence is that of Cytidylate kinase from Photobacterium profundum (strain SS9).